Here is a 200-residue protein sequence, read N- to C-terminus: MKIYVPFKPTNPKSRLSKIMSEDERREFAFQLLLDVLDCCEEAVVLSASRDERLRDLKHEVDERDLDTAVTSRIKKEDSAFVMSDLALISKKIVKKFLDTDGDVVIAPGRKGGTNMLLSRSREFYTSYHYGSFLKHVRIAEKLGLNLSIFDSFYASIDIDDESDLLELMLHGKGKRSYEYLESIGFYVDFSEKEPKLKRA.

It belongs to the CofC family. As to quaternary structure, homodimer.

It catalyses the reaction (2S)-2-phospholactate + GTP + H(+) = (2S)-lactyl-2-diphospho-5'-guanosine + diphosphate. It participates in cofactor biosynthesis; coenzyme F420 biosynthesis. In terms of biological role, guanylyltransferase that catalyzes the activation of (2S)-2-phospholactate (2-PL) as (2S)-lactyl-2-diphospho-5'-guanosine, via the condensation of 2-PL with GTP. It is involved in the biosynthesis of coenzyme F420, a hydride carrier cofactor. This is 2-phospho-L-lactate guanylyltransferase from Ferroglobus placidus (strain DSM 10642 / AEDII12DO).